The sequence spans 257 residues: Acetylglutamate kinase (257 aa).

Substrate-binding positions include 43–44 (GG), R65, and N157. ATP contacts are provided by residues 180–185 (DISSIL) and 208–210 (IIT).

The protein belongs to the acetylglutamate kinase family. ArgB subfamily. As to quaternary structure, homodimer.

The protein localises to the cytoplasm. It carries out the reaction N-acetyl-L-glutamate + ATP = N-acetyl-L-glutamyl 5-phosphate + ADP. It functions in the pathway amino-acid biosynthesis; L-arginine biosynthesis; N(2)-acetyl-L-ornithine from L-glutamate: step 2/4. In terms of biological role, catalyzes the ATP-dependent phosphorylation of N-acetyl-L-glutamate. The sequence is that of Acetylglutamate kinase from Buchnera aphidicola subsp. Acyrthosiphon pisum (strain Tuc7).